A 104-amino-acid polypeptide reads, in one-letter code: Co-chaperonin GroES (104 aa).

This sequence belongs to the GroES chaperonin family. In terms of assembly, heptamer of 7 subunits arranged in a ring. Interacts with the chaperonin GroEL.

Its subcellular location is the cytoplasm. Functionally, together with the chaperonin GroEL, plays an essential role in assisting protein folding. The GroEL-GroES system forms a nano-cage that allows encapsulation of the non-native substrate proteins and provides a physical environment optimized to promote and accelerate protein folding. GroES binds to the apical surface of the GroEL ring, thereby capping the opening of the GroEL channel. The polypeptide is Co-chaperonin GroES (Acidiphilium cryptum (strain JF-5)).